The chain runs to 189 residues: MEALHKKIREEGIVLSDQVLKVDAFLNHQIDPALMKEIGDEFARLFADAGVTKIVTIEASGIAPAVMAGLNMGVPVIFARKHQSLTLTENLLTASVYSFTKQVESTVAISPRHLSSDDNVLIIDDFLANGKASQALISIIKQAGATVAGLGIVIEKSFQGGRAELDAQGYRVESLARVESLAGGVVTFK.

Xanthine contacts are provided by leucine 20 and asparagine 27. Alanine 128–alanine 132 provides a ligand contact to 5-phospho-alpha-D-ribose 1-diphosphate. Lysine 156 provides a ligand contact to xanthine.

Belongs to the purine/pyrimidine phosphoribosyltransferase family. Xpt subfamily. Homodimer.

It localises to the cytoplasm. The enzyme catalyses XMP + diphosphate = xanthine + 5-phospho-alpha-D-ribose 1-diphosphate. It functions in the pathway purine metabolism; XMP biosynthesis via salvage pathway; XMP from xanthine: step 1/1. In terms of biological role, converts the preformed base xanthine, a product of nucleic acid breakdown, to xanthosine 5'-monophosphate (XMP), so it can be reused for RNA or DNA synthesis. This chain is Xanthine phosphoribosyltransferase, found in Pseudomonas syringae pv. syringae (strain B728a).